Consider the following 97-residue polypeptide: Aspartyl/glutamyl-tRNA(Asn/Gln) amidotransferase subunit C (97 aa).

The protein belongs to the GatC family. As to quaternary structure, heterotrimer of A, B and C subunits.

It catalyses the reaction L-glutamyl-tRNA(Gln) + L-glutamine + ATP + H2O = L-glutaminyl-tRNA(Gln) + L-glutamate + ADP + phosphate + H(+). It carries out the reaction L-aspartyl-tRNA(Asn) + L-glutamine + ATP + H2O = L-asparaginyl-tRNA(Asn) + L-glutamate + ADP + phosphate + 2 H(+). Functionally, allows the formation of correctly charged Asn-tRNA(Asn) or Gln-tRNA(Gln) through the transamidation of misacylated Asp-tRNA(Asn) or Glu-tRNA(Gln) in organisms which lack either or both of asparaginyl-tRNA or glutaminyl-tRNA synthetases. The reaction takes place in the presence of glutamine and ATP through an activated phospho-Asp-tRNA(Asn) or phospho-Glu-tRNA(Gln). In Roseiflexus sp. (strain RS-1), this protein is Aspartyl/glutamyl-tRNA(Asn/Gln) amidotransferase subunit C.